A 424-amino-acid chain; its full sequence is UDP-N-acetylglucosamine 1-carboxyvinyltransferase (424 aa).

Phosphoenolpyruvate is bound at residue 22–23 (KN). Position 93 (R93) interacts with UDP-N-acetyl-alpha-D-glucosamine. C117 acts as the Proton donor in catalysis. C117 carries the 2-(S-cysteinyl)pyruvic acid O-phosphothioketal modification. UDP-N-acetyl-alpha-D-glucosamine is bound by residues 122–126 (RPIDL), D307, and V329.

The protein belongs to the EPSP synthase family. MurA subfamily.

It localises to the cytoplasm. The catalysed reaction is phosphoenolpyruvate + UDP-N-acetyl-alpha-D-glucosamine = UDP-N-acetyl-3-O-(1-carboxyvinyl)-alpha-D-glucosamine + phosphate. The protein operates within cell wall biogenesis; peptidoglycan biosynthesis. In terms of biological role, cell wall formation. Adds enolpyruvyl to UDP-N-acetylglucosamine. The chain is UDP-N-acetylglucosamine 1-carboxyvinyltransferase from Pelodictyon phaeoclathratiforme (strain DSM 5477 / BU-1).